Here is a 177-residue protein sequence, read N- to C-terminus: Large ribosomal subunit protein bL17 (177 aa).

Residues 136-177 form a disordered region; that stretch reads AEEEAPAVEAEATEAVEAPVEETAAAEAEAPAEEAADAEKAE. The segment covering 138–149 has biased composition (acidic residues); sequence EEAPAVEAEATE. Residues 150-164 are compositionally biased toward low complexity; the sequence is AVEAPVEETAAAEAE.

Belongs to the bacterial ribosomal protein bL17 family. As to quaternary structure, part of the 50S ribosomal subunit. Contacts protein L32.

The protein is Large ribosomal subunit protein bL17 of Bifidobacterium longum (strain NCC 2705).